A 206-amino-acid polypeptide reads, in one-letter code: Ribosomal RNA small subunit methyltransferase G (206 aa).

Residues G73, L78, 124 to 125 (VE), and R139 contribute to the S-adenosyl-L-methionine site.

It belongs to the methyltransferase superfamily. RNA methyltransferase RsmG family.

It is found in the cytoplasm. It carries out the reaction guanosine(527) in 16S rRNA + S-adenosyl-L-methionine = N(7)-methylguanosine(527) in 16S rRNA + S-adenosyl-L-homocysteine. Its function is as follows. Specifically methylates the N7 position of guanine in position 527 of 16S rRNA. The polypeptide is Ribosomal RNA small subunit methyltransferase G (Yersinia enterocolitica serotype O:8 / biotype 1B (strain NCTC 13174 / 8081)).